Consider the following 303-residue polypeptide: UDP-3-O-acyl-N-acetylglucosamine deacetylase (303 aa).

3 residues coordinate Zn(2+): histidine 78, histidine 237, and aspartate 241. Catalysis depends on histidine 264, which acts as the Proton donor.

It belongs to the LpxC family. It depends on Zn(2+) as a cofactor.

The enzyme catalyses a UDP-3-O-[(3R)-3-hydroxyacyl]-N-acetyl-alpha-D-glucosamine + H2O = a UDP-3-O-[(3R)-3-hydroxyacyl]-alpha-D-glucosamine + acetate. Its pathway is glycolipid biosynthesis; lipid IV(A) biosynthesis; lipid IV(A) from (3R)-3-hydroxytetradecanoyl-[acyl-carrier-protein] and UDP-N-acetyl-alpha-D-glucosamine: step 2/6. In terms of biological role, catalyzes the hydrolysis of UDP-3-O-myristoyl-N-acetylglucosamine to form UDP-3-O-myristoylglucosamine and acetate, the committed step in lipid A biosynthesis. The polypeptide is UDP-3-O-acyl-N-acetylglucosamine deacetylase (Pseudomonas aeruginosa (strain LESB58)).